A 516-amino-acid polypeptide reads, in one-letter code: High-affinity nitrate transporter 2.3 (516 aa).

Helical transmembrane passes span 52 to 72 (WFSFFCCFVSTFAAPPLLPLI), 76 to 96 (LGLTATDIGNAGIASVSGAVF), 112 to 132 (LASASLILLTTPAVYCSSIIQ), 142 to 162 (FFTGISLASFVSAQFWMSSMF), 172 to 192 (GVAGGWGNLGGGAVQLLMPLV), 209 to 229 (IAFFIPGLMQTFSAIAVLAFG), 265 to 285 (WILALTYGYSFGVELTIDNVV), 299 to 319 (TAGLIAASFGMANIISRPGGG), 335 to 354 (LWGLWTVQTIGGVLCVVLGI), 367 to 387 (VLFSFFVQAACGLTFGIVPFV), 395 to 415 (ISGMTGGGGNVGAVLTQYIFF), and 425 to 445 (GIKYMGLMIIACTLPVMLIYF). A disordered region spans residues 489-516 (SVREGGRSSANGGQPRHTVPVDASPAGV).

Belongs to the major facilitator superfamily. Nitrate/nitrite porter (TC 2.A.1.8) family. Heterotetramer composed of two NRT2.3 and two NAR2.1. Isoform 1 interacts with NAR2.1, but not isoform 2. As to expression, expressed in the stelar cells of both primary and lateral roots, particularly at the site of lateral root emergence, root-shoot junction zone, vascular tissues of adventitious root primordia, leaves, germ tips and seed scutellum.

It is found in the cell membrane. Its function is as follows. Involved in nitrate transport, but does not seem to be able to mediate transport by its own. Acts as a dual component transporter with NAR2.1. Imports nitrate with high affinity when expressed with NAR2.1 in a heterologous system (Xenopus oocytes). Plays a key role in long-distance nitrate transport from root to shoot particularly at low external nitrate supply. In Oryza sativa subsp. japonica (Rice), this protein is High-affinity nitrate transporter 2.3 (NRT2.3).